A 252-amino-acid chain; its full sequence is Sensory transduction protein LytR (252 aa).

A Response regulatory domain is found at 2 to 116 (KALIVDDEPL…RINQAVNKVD (115 aa)). Asp-53 bears the 4-aspartylphosphate mark. One can recognise an HTH LytTR-type domain in the interval 147-251 (LPIEVDERIH…MKTFKQQLGL (105 aa)).

Phosphorylated by LytS.

The protein localises to the cytoplasm. Member of the two-component regulatory system LytR/LytS that probably regulates genes involved in cell wall metabolism. The protein is Sensory transduction protein LytR (lytR) of Staphylococcus epidermidis (strain ATCC 12228 / FDA PCI 1200).